A 157-amino-acid chain; its full sequence is 2-C-methyl-D-erythritol 2,4-cyclodiphosphate synthase (157 aa).

Asp-8 and His-10 together coordinate a divalent metal cation. 4-CDP-2-C-methyl-D-erythritol 2-phosphate contacts are provided by residues 8-10 (DVH) and 34-35 (HS). Position 42 (His-42) interacts with a divalent metal cation. Residues 56–58 (DIG), 61–65 (FPDTD), 100–106 (AQRPKMA), 132–135 (TTTE), Phe-139, and Arg-142 contribute to the 4-CDP-2-C-methyl-D-erythritol 2-phosphate site.

Belongs to the IspF family. Homotrimer. A divalent metal cation serves as cofactor.

It carries out the reaction 4-CDP-2-C-methyl-D-erythritol 2-phosphate = 2-C-methyl-D-erythritol 2,4-cyclic diphosphate + CMP. It functions in the pathway isoprenoid biosynthesis; isopentenyl diphosphate biosynthesis via DXP pathway; isopentenyl diphosphate from 1-deoxy-D-xylulose 5-phosphate: step 4/6. Functionally, involved in the biosynthesis of isopentenyl diphosphate (IPP) and dimethylallyl diphosphate (DMAPP), two major building blocks of isoprenoid compounds. Catalyzes the conversion of 4-diphosphocytidyl-2-C-methyl-D-erythritol 2-phosphate (CDP-ME2P) to 2-C-methyl-D-erythritol 2,4-cyclodiphosphate (ME-CPP) with a corresponding release of cytidine 5-monophosphate (CMP). The chain is 2-C-methyl-D-erythritol 2,4-cyclodiphosphate synthase from Geobacter sulfurreducens (strain ATCC 51573 / DSM 12127 / PCA).